Here is an 876-residue protein sequence, read N- to C-terminus: MTLARFVLALMLGALPEVVGFDSVLNDSLHHSHRHSPPPGPHYPSYYLPTQQRPPRTRPPPPLPRFPRPPRALPAQRPHALQAGHTPRPHPWGCPAGEPWVSVTDFGARCLRWAEVPPFLERSPPASWAQLRGQRHNFCRSPDGAGRPWCFYGDARGKVDWGYCDCRHGSVRLRGGKNEFEGTVEVYASGVWGTVCSSHWDDSDASVICHQLQLGGKGIAKQTPFSGLGLIPVYWSNVRCRGDEENILLCEKDIWQGGVCPQKMAAAVTCSFSHGPTFPIIRLAGGSSVHEGRVELYHAGQWGTVCDDQWDDADAEVICRQLGLSGIAKAWHQAYFGEGSGPVMLDEVRCTGNELSIEQCPKSSWGEHNCGHKEDAGVSCTPLTDGVIRLAGGKGSHEGRLEVYYRGQWGTVCDDGWTELNTYVVCRQLGFKYGKQASANHFEESTGPIWLDDVSCSGKETRFLQCSRRQWGRHDCSHREDVSIACYPGGEGHRLSLGFPVRLMDGENKKEGRVEVFINGQWGTICDDGWTDKDAAVICRQLGYKGPARARTMAYFGEGKGPIHVDNVKCTGNERSLADCIKQDIGRHNCRHSEDAGVICDYFGKKASGNSNKESLSSVCGLRLLHRRQKRIIGGKNSLRGGWPWQVSLRLKSYHGDGRLLCGATLLSSCWVLTAAHCFKRYGNSTRNYAVRVGDYHTLVPEEFEEEIGVQQIVIHREYRPDSSDYDIALVRLQGPEEQCARFSSHVLPACLPLWRERPQKTASNCYITGWGDTGRAYSRTLQQAAIPLLPKRFCEERYKGRFTGRMLCAGNLHEHKRVDSCQGDSGGPLMCERPGESWVVYGVTSWGYGCGVKDSPGVYTKVSAFVPWIKSVTKL.

Residues 1 to 20 (MTLARFVLALMLGALPEVVG) form the signal peptide. Asparagine 26 carries N-linked (GlcNAc...) asparagine glycosylation. The disordered stretch occupies residues 29 to 89 (LHHSHRHSPP…ALQAGHTPRP (61 aa)). Over residues 43–54 (YPSYYLPTQQRP) the composition is skewed to low complexity. The span at 57–72 (TRPPPPLPRFPRPPRA) shows a compositional bias: pro residues. Positions 94 to 166 (CPAGEPWVSV…GKVDWGYCDC (73 aa)) constitute a Kringle domain. 20 disulfides stabilise this stretch: cysteine 94-cysteine 166, cysteine 110-cysteine 150, cysteine 139-cysteine 164, cysteine 196-cysteine 260, cysteine 209-cysteine 270, cysteine 240-cysteine 250, cysteine 306-cysteine 370, cysteine 319-cysteine 380, cysteine 350-cysteine 360, cysteine 413-cysteine 476, cysteine 426-cysteine 486, cysteine 456-cysteine 466, cysteine 526-cysteine 590, cysteine 539-cysteine 600, cysteine 570-cysteine 580, cysteine 620-cysteine 751, cysteine 662-cysteine 678, cysteine 766-cysteine 832, cysteine 795-cysteine 809, and cysteine 822-cysteine 851. 4 consecutive SRCR domains span residues 171–272 (VRLR…TCSF), 281–382 (IRLA…SCTP), 388–488 (IRLA…ACYP), and 501–602 (VRLM…ICDY). Residues 620–631 (CGLRLLHRRQKR) form a zymogen activation region region. Positions 632–875 (IIGGKNSLRG…FVPWIKSVTK (244 aa)) constitute a Peptidase S1 domain. The active-site Charge relay system is histidine 677. A glycan (N-linked (GlcNAc...) asparagine) is linked at asparagine 684. The active-site Charge relay system is the aspartate 727. Serine 826 functions as the Charge relay system in the catalytic mechanism.

Belongs to the peptidase S1 family.

The protein resides in the secreted. Its function is as follows. Plays a role in neuronal plasticity and the proteolytic action may subserve structural reorganizations associated with learning and memory operations. The sequence is that of Neurotrypsin (PRSS12) from Gorilla gorilla gorilla (Western lowland gorilla).